We begin with the raw amino-acid sequence, 150 residues long: Large ribosomal subunit protein bL9 (150 aa).

The protein belongs to the bacterial ribosomal protein bL9 family.

Its function is as follows. Binds to the 23S rRNA. This Streptococcus equi subsp. equi (strain 4047) protein is Large ribosomal subunit protein bL9.